The sequence spans 455 residues: Keratin, type I cuticular Ha5 (455 aa).

The interval 1–97 is head; sequence MASKCLKASF…FGEGILTGNE (97 aa). The IF rod domain occupies 97–408; it reads EKETMQSLND…GLLESEDSKL (312 aa). The coil 1A stretch occupies residues 98–132; the sequence is KETMQSLNDRLASYLEKVRQLEQENASLESRIREW. Residues 133 to 143 are linker 1; that stretch reads CEQQVPYMCPD. Residues 144-244 form a coil 1B region; sequence YQSYFRTMEE…HEEEVNSLRC (101 aa). The segment at 245-260 is linker 12; that stretch reads QLGDRLNVEVDAAPPV. A coil 2 region spans residues 261 to 404; that stretch reads DLNRVLDEMR…NTYRGLLESE (144 aa). The interval 405 to 455 is tail; sequence DSKLPCNPCAPDYSSSKSCLPCLPAVSCSTGAARTTCSPRPVCVPCPGGRF.

The protein belongs to the intermediate filament family.

The protein is Keratin, type I cuticular Ha5 of Mus musculus (Mouse).